The following is an 800-amino-acid chain: Leukocyte receptor cluster member 8 homolog (800 aa).

5 disordered regions span residues 118-149 (NYQS…MSYS), 175-229 (PCIQ…GFKF), 245-273 (SSEH…PQQQ), 335-394 (TIDW…GRGS), and 407-519 (KESS…HGHG). Low complexity-rich tracts occupy residues 120–131 (QSMSSQSGQHQG) and 184–201 (NQSN…SQQS). The segment covering 252-261 (SAGQQQQQAT) has biased composition (polar residues). A compositionally biased stretch (basic and acidic residues) spans 338–352 (WSREPLPGKDGGKES). Residues 360–387 (QTTLQTSHGSTITITQSPRGGGNSTNAA) are compositionally biased toward polar residues. Over residues 409-418 (SSSSSSAGSR) the composition is skewed to low complexity. Basic residues-rich tracts occupy residues 419-433 (SRSR…RRYR) and 508-519 (EKRAARFQHGHG). One can recognise a PCI domain in the interval 636-800 (DHEEFNQCQA…KLSLAVLPNI (165 aa)).

This Xenopus laevis (African clawed frog) protein is Leukocyte receptor cluster member 8 homolog (leng8).